Here is a 731-residue protein sequence, read N- to C-terminus: E3 ubiquitin-protein ligase SMURF1 (731 aa).

The region spanning methionine 1 to lysine 120 is the C2 domain. Phosphoserine is present on serine 200. The disordered stretch occupies residues glutamate 216–proline 237. WW domains lie at proline 234–isoleucine 267 and glycine 280–leucine 313. Glycyl lysine isopeptide (Lys-Gly) (interchain with G-Cter in ubiquitin) cross-links involve residues lysine 355 and lysine 357. The HECT domain occupies arginine 394–glutamate 731. Catalysis depends on cysteine 699, which acts as the Glycyl thioester intermediate.

As to quaternary structure, interacts with TRAF4. Interacts (via HECT domain) with FBXL15 (via LRR repeats). Interacts with SMAD7 and TGFBR1; SMAD7 recruits SMURF1 to TGFBR1 and regulates TGF-beta receptor degradation. Interacts with MAVS; the interaction is mediated by NDFIP1. Auto-ubiquitinated in presence of NDFIP1. Ubiquitinated by the SCF(FBXL15) complex at Lys-355 and Lys-357, leading to its degradation by the proteasome. Lys-357 is the primary ubiquitination site.

It is found in the cytoplasm. The protein localises to the cell membrane. The catalysed reaction is S-ubiquitinyl-[E2 ubiquitin-conjugating enzyme]-L-cysteine + [acceptor protein]-L-lysine = [E2 ubiquitin-conjugating enzyme]-L-cysteine + N(6)-ubiquitinyl-[acceptor protein]-L-lysine.. It functions in the pathway protein modification; protein ubiquitination. Functionally, E3 ubiquitin-protein ligase that acts as a negative regulator of BMP signaling pathway. Mediates ubiquitination and degradation of SMAD1 and SMAD5, 2 receptor-regulated SMADs specific for the BMP pathway. Promotes ubiquitination and subsequent proteasomal degradation of TRAF family members and RHOA. Promotes ubiquitination and subsequent proteasomal degradation of MAVS. Acts as an antagonist of TGF-beta signaling by ubiquitinating TGFBR1 and targeting it for degradation. Plays a role in dendrite formation by melanocytes. This Mus musculus (Mouse) protein is E3 ubiquitin-protein ligase SMURF1 (Smurf1).